We begin with the raw amino-acid sequence, 183 residues long: ATP synthase subunit delta (183 aa).

This sequence belongs to the ATPase delta chain family. In terms of assembly, F-type ATPases have 2 components, F(1) - the catalytic core - and F(0) - the membrane proton channel. F(1) has five subunits: alpha(3), beta(3), gamma(1), delta(1), epsilon(1). F(0) has three main subunits: a(1), b(2) and c(10-14). The alpha and beta chains form an alternating ring which encloses part of the gamma chain. F(1) is attached to F(0) by a central stalk formed by the gamma and epsilon chains, while a peripheral stalk is formed by the delta and b chains.

It localises to the cell inner membrane. Its function is as follows. F(1)F(0) ATP synthase produces ATP from ADP in the presence of a proton or sodium gradient. F-type ATPases consist of two structural domains, F(1) containing the extramembraneous catalytic core and F(0) containing the membrane proton channel, linked together by a central stalk and a peripheral stalk. During catalysis, ATP synthesis in the catalytic domain of F(1) is coupled via a rotary mechanism of the central stalk subunits to proton translocation. Functionally, this protein is part of the stalk that links CF(0) to CF(1). It either transmits conformational changes from CF(0) to CF(1) or is implicated in proton conduction. The sequence is that of ATP synthase subunit delta from Nitratidesulfovibrio vulgaris (strain ATCC 29579 / DSM 644 / CCUG 34227 / NCIMB 8303 / VKM B-1760 / Hildenborough) (Desulfovibrio vulgaris).